We begin with the raw amino-acid sequence, 118 residues long: NADH-quinone oxidoreductase subunit A 2 (118 aa).

Helical transmembrane passes span 5-25 (YLPIIVLVVVAVLFGCGSLIF), 62-82 (IIAMLFILFDIEAVFLYPWAV), and 87-107 (LGMFGLMEMGVFIVILFVGYI).

This sequence belongs to the complex I subunit 3 family. As to quaternary structure, NDH-1 is composed of 14 different subunits. Subunits NuoA, H, J, K, L, M, N constitute the membrane sector of the complex.

The protein resides in the cell inner membrane. It catalyses the reaction a quinone + NADH + 5 H(+)(in) = a quinol + NAD(+) + 4 H(+)(out). Functionally, NDH-1 shuttles electrons from NADH, via FMN and iron-sulfur (Fe-S) centers, to quinones in the respiratory chain. The immediate electron acceptor for the enzyme in this species is believed to be ubiquinone. Couples the redox reaction to proton translocation (for every two electrons transferred, four hydrogen ions are translocated across the cytoplasmic membrane), and thus conserves the redox energy in a proton gradient. This chain is NADH-quinone oxidoreductase subunit A 2, found in Geotalea uraniireducens (strain Rf4) (Geobacter uraniireducens).